A 496-amino-acid polypeptide reads, in one-letter code: Glycerol kinase (496 aa).

ADP is bound at residue Thr11. ATP-binding residues include Thr11, Ser12, and Ser13. Thr11 provides a ligand contact to sn-glycerol 3-phosphate. Arg15 serves as a coordination point for ADP. 4 residues coordinate sn-glycerol 3-phosphate: Arg81, Glu82, Tyr133, and Asp242. 5 residues coordinate glycerol: Arg81, Glu82, Tyr133, Asp242, and Gln243. The ADP site is built by Thr264 and Gly307. Residues Thr264, Gly307, Gln311, and Gly412 each contribute to the ATP site. Residues Gly412 and Asn416 each coordinate ADP.

It belongs to the FGGY kinase family.

It carries out the reaction glycerol + ATP = sn-glycerol 3-phosphate + ADP + H(+). Its pathway is polyol metabolism; glycerol degradation via glycerol kinase pathway; sn-glycerol 3-phosphate from glycerol: step 1/1. With respect to regulation, inhibited by fructose 1,6-bisphosphate (FBP). Functionally, key enzyme in the regulation of glycerol uptake and metabolism. Catalyzes the phosphorylation of glycerol to yield sn-glycerol 3-phosphate. This Albidiferax ferrireducens (strain ATCC BAA-621 / DSM 15236 / T118) (Rhodoferax ferrireducens) protein is Glycerol kinase.